The chain runs to 369 residues: Cellular tumor antigen p53 (369 aa).

Positions 1–28 (MAESQEFAELWERNLISTQEAGTCWELI) are transcription activation (acidic). Residues 66-256 (DYPGEHGFKL…KTEESNFRKD (191 aa)) mediate DNA binding. Zn(2+) is bound by residues Cys140, His143, Cys202, and Cys206. The interval 237 to 244 (RVCACPGR) is interaction with DNA. Positions 246-263 (RKTEESNFRKDQETKTLD) are enriched in basic and acidic residues. 2 disordered regions span residues 246–296 (RKTE…SGSS) and 318–369 (NDSL…SDSD). The segment covering 269-281 (NKRSLTKDSTSSV) has biased composition (polar residues). Residues 270–289 (KRSLTKDSTSSVPRPEGSKK) carry the Bipartite nuclear localization signal motif. The interval 298–329 (EEIYTLQVRGKERYEMLKKINDSLELSDVVPP) is oligomerization. The short motif at 312 to 323 (EMLKKINDSLEL) is the Nuclear export signal element. The basic (repression of DNA-binding) stretch occupies residues 342 to 365 (KGKKKDGQTPEPKRGKKLMVKDEK). Over residues 346–369 (KDGQTPEPKRGKKLMVKDEKSDSD) the composition is skewed to basic and acidic residues.

It belongs to the p53 family. In terms of assembly, binds DNA as a homotetramer. Zn(2+) is required as a cofactor.

It is found in the cytoplasm. Its subcellular location is the nucleus. In terms of biological role, multifunctional transcription factor that induces cell cycle arrest, DNA repair or apoptosis upon binding to its target DNA sequence. Acts as a tumor suppressor in many tumor types; induces growth arrest or apoptosis depending on the physiological circumstances and cell type. Negatively regulates cell division by controlling expression of a set of genes required for this process. One of the activated genes is an inhibitor of cyclin-dependent kinases. Apoptosis induction seems to be mediated either by stimulation of BAX and FAS antigen expression, or by repression of Bcl-2 expression. The chain is Cellular tumor antigen p53 (tp53) from Barbus barbus (Barbel).